The following is a 713-amino-acid chain: uncharacterized protein (713 aa).

A helical transmembrane segment spans residues valine 686 to phenylalanine 706.

It belongs to the plectrovirus ORF1 family.

It is found in the host membrane. This is an uncharacterized protein from Spiroplasma melliferum (SpV1).